The primary structure comprises 564 residues: Isopullulanase (564 aa).

The N-terminal stretch at 1-19 (MRSTGYLLTLSAAFQVAQA) is a signal peptide. N-linked (GlcNAc...) asparagine glycans are attached at residues N24, N94, N115, N138, N186, N210, N305, N381, N448, N455, N460, N486, N491, N503, and N535.

In terms of processing, N-glycosylated.

The protein localises to the secreted. The catalysed reaction is Hydrolysis of pullulan to isopanose (6-alpha-maltosylglucose).. Hydrolyzes pullulan, a linear polymer which is composed of maltotriose units with alpha-1,6 glucosidic linkages, to produce isopanose (Glca1-4Glca1-6Glc). This Aspergillus niger protein is Isopullulanase (ipuA).